The chain runs to 540 residues: Medium/long-chain-fatty-acid--[acyl-carrier-protein] ligase FadD10 (540 aa).

Mg(2+) is bound at residue threonine 177. Residues isoleucine 226, valine 316, and serine 320 each coordinate ATP. Glutamate 321 contacts Mg(2+). Residue aspartate 408 coordinates ATP.

This sequence belongs to the ATP-dependent AMP-binding enzyme family. Homodimer. Mg(2+) is required as a cofactor.

The protein resides in the cytoplasm. The enzyme catalyses a medium-chain fatty acid + holo-[ACP] + ATP = a medium-chain fatty acyl-[ACP] + AMP + diphosphate. It carries out the reaction a medium-chain fatty acid + ATP + H(+) = a medium-chain fatty acyl-AMP + diphosphate. The catalysed reaction is a medium-chain fatty acyl-AMP + holo-[ACP] = a medium-chain fatty acyl-[ACP] + AMP + H(+). It catalyses the reaction a long-chain fatty acid + holo-[ACP] + ATP = a long-chain fatty acyl-[ACP] + AMP + diphosphate. The enzyme catalyses a long-chain fatty acid + ATP + H(+) = a long-chain fatty acyl-AMP + diphosphate. It carries out the reaction a long-chain fatty acyl-AMP + holo-[ACP] = a long-chain fatty acyl-[ACP] + AMP + H(+). The catalysed reaction is a (2E)-enoyl fatty acid + holo-[ACP] + ATP = a (2E)-enoyl-[ACP] + AMP + diphosphate. It catalyses the reaction a (2E)-enoyl fatty acid + ATP + H(+) = a (2E)-2-fatty-enoyl-AMP + diphosphate. The enzyme catalyses a (2E)-2-fatty-enoyl-AMP + holo-[ACP] = a (2E)-enoyl-[ACP] + AMP + H(+). It carries out the reaction a (3R)-3-isocyanyl-fatty acid + holo-[ACP] + ATP = a (3R)-3-isocyanyl-fatty acyl-[ACP] + AMP + diphosphate. The catalysed reaction is a (3R)-3-isocyanyl-fatty acid + ATP + H(+) = a (3R)-3-isocyanyl-fatty acyl-AMP + diphosphate. It catalyses the reaction a (3R)-3-isocyanyl-fatty acyl-AMP + holo-[ACP] = a (3R)-3-isocyanyl-fatty acyl-[ACP] + AMP + H(+). The protein operates within lipid metabolism; fatty acid metabolism. In terms of biological role, acyl:acyl-carrier protein ligase involved in the biosynthesis of a unique class of isonitrile lipopeptides (INLPs) that seem to function as virulence factors in M.tuberculosis and to play a role in metal acquisition. Catalyzes the activation of medium/long-chain fatty acids as acyl-adenylates (acyl-AMP), which are then transferred to the phosphopantetheine arm of the acyl-carrier protein (ACP) MT0109. Acts twice during the INLP pathway, catalyzing the activation of a (2E)-enoyl fatty acid as well as the corresponding (3R)-3-isocyanyl-fatty acid as acyl-adenylates (acyl-AMP), and then the acyl transfer to the dedicated acyl-carrier protein MT0109. This chain is Medium/long-chain-fatty-acid--[acyl-carrier-protein] ligase FadD10 (fadD10), found in Mycobacterium tuberculosis (strain CDC 1551 / Oshkosh).